A 71-amino-acid chain; its full sequence is Ubiquinol-cytochrome c reductase complex assembly factor 6 (71 aa).

At 1 to 8 (MPAGVPMS) the chain is on the mitochondrial matrix side. The chain crosses the membrane as a helical; Signal-anchor for type II membrane protein span at residues 9-25 (TYLKMFAASLLAMCAGA). The Mitochondrial intermembrane portion of the chain corresponds to 26–71 (EVVHRYYRPDLTIPEIPPKRGELKTELLGLKERKHKPQVSQQEELK).

Belongs to the UQCC6 family. In terms of assembly, interacts with UQCRC1. Interacts with UQCRQ. Interacts with UQCC5. Forms a complex, named COMB/coordinator of mitochondrial CYTB biogenesis, composed of UQCC1, UQCC2, UQCC4, UQCC5 and UQCC6; stabilizes nascent cytochrome b/MT-CYB and promotes its membrane insertion. Forms a complex, named COMA, composed of UQCC1, UQCC2 and UQCC4; activates MT-CYB translation. Forms a complex, named COMC, composed of UQCC1, UQCC2; UQCC3 and UQCC4; mediates MT-CYB hemylation and association with the first nuclear-encoded complex III subunit UQCRQ. Interacts with MT-CYB. As to expression, cardiac and skeletal muscle (at protein level).

It is found in the mitochondrion inner membrane. In terms of biological role, required for the assembly and stability of the mitochondrial ubiquinol-cytochrome c reductase complex (complex III (CIII) or cytochrome b-c1 complex), a multisubunit transmembrane complex that is part of the mitochondrial electron transport chain (ETC) which drives oxidative phosphorylation. Mediates early complex III biogenesis. Participates in regulating the levels of electron transport chain proteins, and therefore energy supply, in response to changes in energy demand. Also required for cytochrome c oxidase complex (complex IV) assembly. The chain is Ubiquinol-cytochrome c reductase complex assembly factor 6 from Homo sapiens (Human).